Consider the following 406-residue polypeptide: Solanesyl diphosphate synthase 1, chloroplastic (406 aa).

The transit peptide at 1–71 (MMTSCRNIDL…NGIGQSQTVS (71 aa)) directs the protein to the chloroplast. Isopentenyl diphosphate contacts are provided by K126, R129, and H164. Positions 171 and 175 each coordinate Mg(2+). Position 180 (R180) interacts with an all-trans-polyprenyl diphosphate. R181 is an isopentenyl diphosphate binding site. An all-trans-polyprenyl diphosphate contacts are provided by K257, T258, Q295, and K312.

It belongs to the FPP/GGPP synthase family. Homodimer. Interacts with FBN5. It depends on Mg(2+) as a cofactor. In terms of tissue distribution, higher expression in leaves than in roots.

It is found in the plastid. The protein localises to the chloroplast. It carries out the reaction 5 isopentenyl diphosphate + (2E,6E,10E)-geranylgeranyl diphosphate = all-trans-nonaprenyl diphosphate + 5 diphosphate. The catalysed reaction is isopentenyl diphosphate + (2E,6E)-farnesyl diphosphate = (2E,6E,10E)-geranylgeranyl diphosphate + diphosphate. Involved in providing solanesyl diphosphate for plastoquinone-9 (PQ-9) formation in plastids. Catalyzes the elongation of the prenyl side chain of PQ-9 in plastids. Contributes to the biosynthesis of plastochromanol-8 (PC-8) in plastids. Does not contribute to the synthesis of tocopherol or ubiquinone. PQ-9 and PC-8 are lipophilic antioxidants that act as protectant against photooxidative stress under high light stress conditions. Prefers geranylgeranyl diphosphate to farnesyl diphosphate as substrate. No activity with geranyl diphosphate or dimethylallyl diphosphate as substrate. This chain is Solanesyl diphosphate synthase 1, chloroplastic, found in Arabidopsis thaliana (Mouse-ear cress).